The sequence spans 309 residues: Small ribosomal subunit biogenesis GTPase RsgA (309 aa).

Positions 64-225 (ENELVRPPLA…VADTPGFSTY (162 aa)) constitute a CP-type G domain. GTP-binding positions include 113 to 116 (SKTD) and 168 to 176 (GQTGAGKST). Residues cysteine 249, cysteine 254, histidine 256, and cysteine 262 each coordinate Zn(2+).

Belongs to the TRAFAC class YlqF/YawG GTPase family. RsgA subfamily. Monomer. Associates with 30S ribosomal subunit, binds 16S rRNA. Zn(2+) is required as a cofactor.

Its subcellular location is the cytoplasm. Its function is as follows. One of several proteins that assist in the late maturation steps of the functional core of the 30S ribosomal subunit. Helps release RbfA from mature subunits. May play a role in the assembly of ribosomal proteins into the subunit. Circularly permuted GTPase that catalyzes slow GTP hydrolysis, GTPase activity is stimulated by the 30S ribosomal subunit. This Pediococcus pentosaceus (strain ATCC 25745 / CCUG 21536 / LMG 10740 / 183-1w) protein is Small ribosomal subunit biogenesis GTPase RsgA.